Consider the following 319-residue polypeptide: Acetyl esterase (319 aa).

The short motif at 91 to 93 (HGG) is the Involved in the stabilization of the negatively charged intermediate by the formation of the oxyanion hole element. Active-site residues include S165, D262, and H292.

Belongs to the 'GDXG' lipolytic enzyme family. In terms of assembly, homodimer. Interacts with MalT and MelA.

The protein resides in the cytoplasm. Its function is as follows. Displays esterase activity towards short chain fatty esters (acyl chain length of up to 8 carbons). Able to hydrolyze triacetylglycerol (triacetin) and tributyrylglycerol (tributyrin), but not trioleylglycerol (triolein) or cholesterol oleate. Negatively regulates MalT activity by antagonizing maltotriose binding. Inhibits MelA galactosidase activity. This Escherichia coli (strain 55989 / EAEC) protein is Acetyl esterase.